Reading from the N-terminus, the 449-residue chain is GTPase Der (449 aa).

2 EngA-type G domains span residues 3-167 (SIVA…PDEP) and 175-350 (TNIA…EQYS). GTP contacts are provided by residues 9-16 (GRPNVGKS), 56-60 (DTGGF), 119-122 (NKVD), 181-188 (GRPNVGKS), 228-232 (DTAGI), and 293-296 (NKWD). Positions 351–435 (RRVTTSELNR…PFRLLFRGRE (85 aa)) constitute a KH-like domain.

The protein belongs to the TRAFAC class TrmE-Era-EngA-EngB-Septin-like GTPase superfamily. EngA (Der) GTPase family. As to quaternary structure, associates with the 50S ribosomal subunit.

GTPase that plays an essential role in the late steps of ribosome biogenesis. The chain is GTPase Der from Trichlorobacter lovleyi (strain ATCC BAA-1151 / DSM 17278 / SZ) (Geobacter lovleyi).